Here is a 157-residue protein sequence, read N- to C-terminus: SsrA-binding protein (157 aa).

The segment covering 135–151 (DKRETEKKRDWSREKGR) has biased composition (basic and acidic residues). A disordered region spans residues 135–157 (DKRETEKKRDWSREKGRLLRARG).

It belongs to the SmpB family.

It is found in the cytoplasm. In terms of biological role, required for rescue of stalled ribosomes mediated by trans-translation. Binds to transfer-messenger RNA (tmRNA), required for stable association of tmRNA with ribosomes. tmRNA and SmpB together mimic tRNA shape, replacing the anticodon stem-loop with SmpB. tmRNA is encoded by the ssrA gene; the 2 termini fold to resemble tRNA(Ala) and it encodes a 'tag peptide', a short internal open reading frame. During trans-translation Ala-aminoacylated tmRNA acts like a tRNA, entering the A-site of stalled ribosomes, displacing the stalled mRNA. The ribosome then switches to translate the ORF on the tmRNA; the nascent peptide is terminated with the 'tag peptide' encoded by the tmRNA and targeted for degradation. The ribosome is freed to recommence translation, which seems to be the essential function of trans-translation. In Rhodopseudomonas palustris (strain BisB5), this protein is SsrA-binding protein.